The chain runs to 146 residues: MALYEHIYLARQDVSAQQVETLTEQFRGIIESLGGKIEKVEYWGVKTLAYRIKKNRKAHFTLLNIDAPAAAITEMERQSSLNEDVLRLLTIRVEALEAGQSAMMRKRDDDDRGDRPDRGDRGRGPRPDRPPRRPRDDAAASDEGGF.

The disordered stretch occupies residues Q100–F146. The segment covering R105 to A138 has biased composition (basic and acidic residues).

Belongs to the bacterial ribosomal protein bS6 family.

In terms of biological role, binds together with bS18 to 16S ribosomal RNA. The sequence is that of Small ribosomal subunit protein bS6 from Methylocella silvestris (strain DSM 15510 / CIP 108128 / LMG 27833 / NCIMB 13906 / BL2).